The chain runs to 984 residues: MYCBP-associated protein (984 aa).

Disordered regions lie at residues 61 to 88 (LEAS…EEPE) and 218 to 240 (GESK…PQHN). Residues 218–231 (GESKQKAPKEEKRP) are compositionally biased toward basic and acidic residues. A Phosphothreonine modification is found at Thr-613. Ser-619 bears the Phosphoserine mark. 2 disordered regions span residues 693–729 (SPIS…KSIM) and 842–917 (PEEQ…ASQD). Positions 862–910 (AGKEERKGAAQEKKQLGIKDKEDKKGAKLLGKEDRPNSKKHKAKDDKKV) are enriched in basic and acidic residues.

In terms of assembly, interacts with MYCBP. In terms of tissue distribution, expressed specifically in testis.

It localises to the cytoplasm. It is found in the membrane. Its function is as follows. May play a role in spermatogenesis. May be involved in synaptic processes. The protein is MYCBP-associated protein of Homo sapiens (Human).